The sequence spans 376 residues: Dihydroorotate dehydrogenase (quinone) (376 aa).

FMN contacts are provided by residues 74-78 (AGFDK) and threonine 98. Lysine 78 lines the substrate pocket. 123 to 127 (NHMGF) contacts substrate. Residues asparagine 152 and asparagine 185 each coordinate FMN. Asparagine 185 lines the substrate pocket. The active-site Nucleophile is the serine 188. Substrate is bound at residue asparagine 190. Lysine 223 and threonine 251 together coordinate FMN. Residue 252 to 253 (NT) participates in substrate binding. FMN contacts are provided by residues glycine 280, glycine 309, and 330-331 (YT). Residues 352–376 (RNPAPSSPERMPTGIQSGRKIVMDP) are disordered.

This sequence belongs to the dihydroorotate dehydrogenase family. Type 2 subfamily. Monomer. FMN is required as a cofactor.

It is found in the cell membrane. It carries out the reaction (S)-dihydroorotate + a quinone = orotate + a quinol. It participates in pyrimidine metabolism; UMP biosynthesis via de novo pathway; orotate from (S)-dihydroorotate (quinone route): step 1/1. Functionally, catalyzes the conversion of dihydroorotate to orotate with quinone as electron acceptor. The chain is Dihydroorotate dehydrogenase (quinone) from Synechococcus sp. (strain JA-3-3Ab) (Cyanobacteria bacterium Yellowstone A-Prime).